The primary structure comprises 527 residues: Ribonuclease Y (527 aa).

The chain crosses the membrane as a helical span at residues 21–41 (ILAIFFSFIIGIVFGGMALFV). The interval 78-97 (READKTRNSAETELKERRSE) is disordered. Residues 217–302 (TTNVVPLPSD…EVVTKAKEEV (86 aa)) form the KH domain. One can recognise an HD domain in the interval 343-436 (VLQHSIEVAQ…VSAADAISSA (94 aa)).

It belongs to the RNase Y family.

The protein localises to the cell membrane. Endoribonuclease that initiates mRNA decay. The protein is Ribonuclease Y of Dehalococcoides mccartyi (strain ATCC BAA-2100 / JCM 16839 / KCTC 5957 / BAV1).